Here is a 485-residue protein sequence, read N- to C-terminus: Adenosylhomocysteinase (485 aa).

Positions 64, 139, and 205 each coordinate substrate. 206–208 (TTT) serves as a coordination point for NAD(+). The substrate site is built by K235 and D239. Residues N240, 269–274 (GYGDVG), E292, N327, 348–350 (IGH), and N397 each bind NAD(+).

It belongs to the adenosylhomocysteinase family. NAD(+) is required as a cofactor.

The catalysed reaction is S-adenosyl-L-homocysteine + H2O = L-homocysteine + adenosine. It functions in the pathway amino-acid biosynthesis; L-homocysteine biosynthesis; L-homocysteine from S-adenosyl-L-homocysteine: step 1/1. In terms of biological role, adenosylhomocysteine is a competitive inhibitor of S-adenosyl-L-methionine-dependent methyl transferase reactions; therefore adenosylhomocysteinase may play a key role in the control of methylations via regulation of the intracellular concentration of adenosylhomocysteine. The chain is Adenosylhomocysteinase (SAHH) from Solanum lycopersicum (Tomato).